A 428-amino-acid polypeptide reads, in one-letter code: Histone deacetylase 3 (428 aa).

Positions 3–316 (KTVAYFYDPD…WTYETSLLVE (314 aa)) are histone deacetylase. Residues H17, G21, and K25 each coordinate 1D-myo-inositol 1,4,5,6-tetrakisphosphate. The active site involves H135. Zn(2+)-binding residues include D170, H172, and D259. R265 lines the 1D-myo-inositol 1,4,5,6-tetrakisphosphate pocket. Composition is skewed to basic and acidic residues over residues 388 to 405 (DRTD…ENYS) and 415 to 428 (DGDH…DVEI). The disordered stretch occupies residues 388 to 428 (DRTDEADAEERGPEENYSRPEAPNEFYDGDHDNDKESDVEI). S424 is subject to Phosphoserine.

It belongs to the histone deacetylase family. HD type 1 subfamily. As to quaternary structure, interacts with HDAC7 and HDAC9. Interacts with DAXX, KDM4A, HDAC10 and DACH1. Found in a complex with NCOR1 and NCOR2. Component of the N-Cor repressor complex, at least composed of NCOR1, NCOR2, HDAC3, TBL1X, TBL1R, CORO2A and GPS2. Interacts with BCOR, MJD2A/JHDM3A, NRIP1, PRDM6 and SRY. Interacts with BTBD14B. Interacts with GLIS2. Interacts (via the DNA-binding domain) with NR2C1; the interaction recruits phosphorylated NR2C1 to PML bodies for sumoylation. Component of the Notch corepressor complex. Interacts with CBFA2T3 and NKAP. Interacts with APEX1; the interaction is not dependent on the acetylated status of APEX1. Interacts with ZMYND15. Interacts with SMRT/NCOR2 and BCL6 on DNA enhancer elements. Interacts with INSM1. Interacts with XBP1 isoform 1; the interaction occurs in endothelial cell (EC) under disturbed flow. Interacts (via C-terminus) with CCAR2 (via N-terminus). Interacts with and deacetylates MEF2D. Interacts with BEND3. Interacts with NKAPL. Interacts with DHX36; this interaction occurs in a RNA-dependent manner. Interacts weakly with CRY1; this interaction is enhanced in the presence of FBXL3. Interacts with FBXL3 and BMAL1. Interacts with NCOR1. Interacts with RARA. Interacts with SETD5. In terms of processing, sumoylated in vitro. Post-translationally, deubiquitinated on 'Lys-63'-linked ubiquitin chains by USP38; leading to a decreased level of histone acetylation.

Its subcellular location is the nucleus. The protein localises to the chromosome. The protein resides in the cytoplasm. It is found in the cytosol. It carries out the reaction N(6)-acetyl-L-lysyl-[histone] + H2O = L-lysyl-[histone] + acetate. The catalysed reaction is N(6)-acetyl-L-lysyl-[protein] + H2O = L-lysyl-[protein] + acetate. It catalyses the reaction N(6)-(2E)-butenoyl-L-lysyl-[protein] + H2O = (2E)-2-butenoate + L-lysyl-[protein]. The enzyme catalyses N(6)-(2-hydroxyisobutanoyl)-L-lysyl-[protein] + H2O = 2-hydroxy-2-methylpropanoate + L-lysyl-[protein]. It carries out the reaction N(6)-[(S)-lactoyl]-L-lysyl-[protein] + H2O = (S)-lactate + L-lysyl-[protein]. With respect to regulation, inositol tetraphosphate (1D-myo-inositol 1,4,5,6-tetrakisphosphate) promotes the histone deacetylase activity by acting as an intermolecular glue between HDAC3 and NCOR2, thereby promoting its association with the N-Cor complex, a prerequisite for the histone deacetylase activity. Functionally, histone deacetylase that catalyzes the deacetylation of lysine residues on the N-terminal part of the core histones (H2A, H2B, H3 and H4), and some other non-histone substrates. Histone deacetylation gives a tag for epigenetic repression and plays an important role in transcriptional regulation, cell cycle progression and developmental events. Histone deacetylases act via the formation of large multiprotein complexes, such as N-Cor repressor complex, which activate the histone deacetylase activity. Participates in the BCL6 transcriptional repressor activity by deacetylating the H3 'Lys-27' (H3K27) on enhancer elements, antagonizing EP300 acetyltransferase activity and repressing proximal gene expression. Acts as a molecular chaperone for shuttling phosphorylated NR2C1 to PML bodies for sumoylation. Contributes, together with XBP1 isoform 1, to the activation of NFE2L2-mediated HMOX1 transcription factor gene expression in a PI(3)K/mTORC2/Akt-dependent signaling pathway leading to endothelial cell (EC) survival under disturbed flow/oxidative stress. Regulates both the transcriptional activation and repression phases of the circadian clock in a deacetylase activity-independent manner. During the activation phase, promotes the accumulation of ubiquitinated BMAL1 at the E-boxes and during the repression phase, blocks FBXL3-mediated CRY1/2 ubiquitination and promotes the interaction of CRY1 and BMAL1. The NCOR1-HDAC3 complex regulates the circadian expression of the core clock gene BMAL1 and the genes involved in lipid metabolism in the liver. Also functions as deacetylase for non-histone targets, such as KAT5, MEF2D, MAPK14, RARA and STAT3. Serves as a corepressor of RARA, mediating its deacetylation and repression, leading to inhibition of RARE DNA element binding. In addition to protein deacetylase activity, also acts as a protein-lysine deacylase by recognizing other acyl groups: catalyzes removal of (2E)-butenoyl (crotonyl), lactoyl (lactyl) and 2-hydroxyisobutanoyl (2-hydroxyisobutyryl) acyl groups from lysine residues, leading to protein decrotonylation, delactylation and de-2-hydroxyisobutyrylation, respectively. Catalyzes decrotonylation of MAPRE1/EB1. Mediates delactylation NBN/NBS1, thereby inhibiting DNA double-strand breaks (DSBs) via homologous recombination (HR). This is Histone deacetylase 3 from Mus musculus (Mouse).